We begin with the raw amino-acid sequence, 104 residues long: Guanidinium exporter (104 aa).

Over 1 to 3 (MSW) the chain is Cytoplasmic. Residues 4 to 26 (IILFVAGLLEIVWAVGLKYTHGF) form a helical membrane-spanning segment. The Periplasmic segment spans residues 27 to 32 (TRLTPS). Residues 33 to 50 (IITISAMIVSMGMLSYAM) form a helical membrane-spanning segment. The Cytoplasmic portion of the chain corresponds to 51-54 (KGLP). A helical transmembrane segment spans residues 55–77 (AGTAYAIWTGIGAVGTAIFGIIV). Residues 78 to 83 (FGESAN) are Periplasmic-facing. The chain crosses the membrane as a helical span at residues 84–103 (IYRLLSLAMIVFGIIGLKLA). Serine 104 is a topological domain (cytoplasmic).

It belongs to the drug/metabolite transporter (DMT) superfamily. Small multidrug resistance (SMR) (TC 2.A.7.1) family. Gdx/SugE subfamily.

The protein localises to the cell inner membrane. Functionally, guanidinium ion exporter. Couples guanidinium export to the proton motive force, exchanging one guanidinium ion for two protons. The sequence is that of Guanidinium exporter from Proteus vulgaris.